We begin with the raw amino-acid sequence, 426 residues long: Fatty alcohol:caffeoyl-CoA acyltransferase (426 aa).

Residues histidine 162 and aspartate 374 each act as proton acceptor in the active site.

The protein belongs to the plant acyltransferase family. As to expression, expressed in the outermost circumference of mature roots, the endodermis of young roots and in the seed coat of developing seeds. Expressed in outer integument layer 1 of the seed coat.

Involved in the synthesis of alkyl hydroxycinnamates in root waxes. Functions as a fatty alcohol:hydroxy cinnamoyl-CoA acyltransferase with apparent preference for caffeoyl-CoA. The protein is Fatty alcohol:caffeoyl-CoA acyltransferase of Arabidopsis thaliana (Mouse-ear cress).